The following is a 178-amino-acid chain: Interleukin-17B (178 aa).

An N-terminal signal peptide occupies residues 1 to 22 (MDWPHSLLFLLAISIFLGPSQP). The tract at residues 21–44 (QPRNTKGKRKGQVRPGPLAPGPHQ) is disordered. The N-linked (GlcNAc...) asparagine glycan is linked to asparagine 75. Intrachain disulfides connect cysteine 121–cysteine 176 and cysteine 126–cysteine 178.

It belongs to the IL-17 family.

The protein resides in the secreted. Functionally, stimulates the release of tumor necrosis factor alpha and IL-1-beta from the monocytic cell line THP-1. The polypeptide is Interleukin-17B (IL17B) (Mesocricetus auratus (Golden hamster)).